The following is a 284-amino-acid chain: 2-dehydro-3-deoxyphosphooctonate aldolase (284 aa).

It belongs to the KdsA family.

It is found in the cytoplasm. It catalyses the reaction D-arabinose 5-phosphate + phosphoenolpyruvate + H2O = 3-deoxy-alpha-D-manno-2-octulosonate-8-phosphate + phosphate. Its pathway is carbohydrate biosynthesis; 3-deoxy-D-manno-octulosonate biosynthesis; 3-deoxy-D-manno-octulosonate from D-ribulose 5-phosphate: step 2/3. It participates in bacterial outer membrane biogenesis; lipopolysaccharide biosynthesis. The sequence is that of 2-dehydro-3-deoxyphosphooctonate aldolase from Burkholderia multivorans (strain ATCC 17616 / 249).